The chain runs to 539 residues: Protoporphyrinogen oxidase (539 aa).

Residues 18 to 23, 43 to 44, Trp51, 70 to 73, Val300, and 521 to 523 each bind FAD; these read GGGVSG, ES, GPRT, and PGV.

It belongs to the protoporphyrinogen/coproporphyrinogen oxidase family. Protoporphyrinogen oxidase subfamily. It depends on FAD as a cofactor.

It is found in the mitochondrion inner membrane. It carries out the reaction protoporphyrinogen IX + 3 O2 = protoporphyrin IX + 3 H2O2. The protein operates within porphyrin-containing compound metabolism; protoporphyrin-IX biosynthesis; protoporphyrin-IX from protoporphyrinogen-IX: step 1/1. Functionally, catalyzes the 6-electron oxidation of protoporphyrinogen-IX to form protoporphyrin-IX. The chain is Protoporphyrinogen oxidase from Saccharomyces cerevisiae (strain ATCC 204508 / S288c) (Baker's yeast).